A 267-amino-acid polypeptide reads, in one-letter code: Strigolactone esterase D14 (267 aa).

The Nucleophile role is filled by S97. Residues D218 and H247 contribute to the active site.

The protein belongs to the AB hydrolase superfamily. In terms of assembly, interacts with SMXL6, SMXL7 and SMXL8. The interaction with SMXLs occurs in the presence of (2'R) stereoisomers of strigolactones, but not (2'S) stereoisomers. Interacts with MAX2. Forms a complex with MAX2 and SKP1A/ASK1 in presence of strigolactone. As to expression, expressed at high levels in rosette and cauline leaves and at lower levels in axillary buds, inflorescences, stems, roots and developing vascular tissue of cotyledons.

Its subcellular location is the cytoplasm. It localises to the nucleus. Its function is as follows. Involved in strigolactone signaling pathway. Does not move long distances acropetally in the plant to regulate shoot branching and is rapidly degraded in the presence of strigolactones. Functions downstream of strigolactone synthesis, as a component of hormone signaling and as an enzyme that participates in the conversion of strigolactones to the bioactive form. Acts probably as a strigolactone receptor. Strigolactones are hormones that inhibit tillering and shoot branching through the MAX-dependent pathway, contribute to the regulation of shoot architectural response to phosphate-limiting conditions and function as rhizosphere signal that stimulates hyphal branching of arbuscular mycorrhizal fungi and trigger seed germination of root parasitic weeds. Hydrolyzes methyl carlactonoate (MeCLA), but not carlactone (CL) or carlactonoic acid (CLA). Hydrolyzes the butenolide ring of strigolactones. The initial nucleophilic attack causes an electron shift, followed by the addition of a water molecule, to lead to the release of the ABC ring product and the formation of a 'Ser-97'-stabilized open lactone intermediate. Has no esterase activity for 4-nitrophenyl butyrate. Binds and hydrolyzes the synthetic strigolactone analog GR24 in vitro. Forms a stable covalent complex with the D-ring of strigolactone, which is essential for hormone bioactivity. The D-ring is attached to His-247 of the catalytic triad. The hydrolysis of strigolactone into a covalently linked intermediate molecule initiates a conformational change of D14 to facilitate interaction with MAX2 and formation of the D14-MAX2-SKP1/ASK1 complex to trigger strigolactone signaling. This mechanism defines D14 as a non-canonical hormone receptor with dual functions to generate and sense the active form of strigolactone. The polypeptide is Strigolactone esterase D14 (Arabidopsis thaliana (Mouse-ear cress)).